A 213-amino-acid polypeptide reads, in one-letter code: Elongation factor 1-beta (213 aa).

The span at 67–80 (AGKAPAASGSAAAA) shows a compositional bias: low complexity. Positions 67 to 88 (AGKAPAASGSAAAAAEEEDDED) are disordered.

This sequence belongs to the EF-1-beta/EF-1-delta family. EF-1 is composed of 4 subunits: alpha, beta, delta, and gamma.

In terms of biological role, EF-1-beta and EF-1-delta stimulate the exchange of GDP bound to EF-1-alpha to GTP. In Candida albicans (strain WO-1) (Yeast), this protein is Elongation factor 1-beta (EFB1).